The sequence spans 648 residues: Leucine-rich repeat transmembrane protein FLRT3 (648 aa).

The signal sequence occupies residues 1–28; it reads MSTETWNLFVAWAQLLLLFRISPQYVNA. Topologically, residues 29 to 527 are extracellular; that stretch reads KPCPSVCRCD…KEPYKNSSLP (499 aa). Positions 30–62 constitute an LRRNT domain; it reads PCPSVCRCDGGFIYCNDRDLTSIPSGIPDDATT. 2 disulfide bridges follow: Cys31–Cys37 and Cys35–Cys44. LRR repeat units lie at residues 58–82, 83–105, 107–126, 127–152, 154–179, 181–197, 198–223, 225–246, 247–269, and 270–293; these read DDAT…LRGL, DKVE…LPKN, KELH…ALSQ, IPSI…AFRD, IFLR…TIEE, RLDD…SLQD, LTNL…VFMN, INLT…NLPG, TNLR…AFAD, and LTQL…IFDD. Asn226 carries N-linked (GlcNAc...) asparagine glycosylation. Positions 305–356 constitute an LRRCT domain; sequence NPWYCGCKMKWVRDWLQSLPSKVNVRGLMCQAPERVRGMTIKDLNKELFDCK. A disulfide bridge links Cys309 with Cys334. A Fibronectin type-III domain is found at 409-503; it reads KIITIQVKSI…VCIETETAPL (95 aa). The helical transmembrane segment at 528 to 548 threads the bilayer; the sequence is LAAIIGGAVALVAITLLALVC. Residues 549–648 are Cytoplasmic-facing; it reads WYVHRNGSLF…GIPDSDHSHS (100 aa). The segment covering 624 to 633 has biased composition (low complexity); the sequence is NSHSESSSNR. Residues 624–648 are disordered; it reads NSHSESSSNRSYRDSGIPDSDHSHS.

Interacts with fgfr1 and fgfr4. Interacts with rnd1, cdh1 and pcdh8. Interacts (via extracellular domain) with unc5b and unc5d (via extracellular domain). N-glycosylated. In terms of processing, proteolytic cleavage in the juxtamembrane region gives rise to a soluble ectodomain. Cleavage is probably effected by a metalloprotease.

It is found in the cell membrane. It localises to the endoplasmic reticulum membrane. Its subcellular location is the cell junction. The protein resides in the focal adhesion. The protein localises to the secreted. It is found in the cell projection. It localises to the axon. Its subcellular location is the growth cone membrane. Functionally, functions in cell-cell adhesion, cell migration and axon guidance, exerting an attractive or repulsive role depending on its interaction partners. Modulates cadherin-dependent cell-cell adhesion and cell sorting. Plays a role in the spatial organization of brain neurons. Plays a role in vascular development. Plays a role in cell-cell adhesion via its interaction with latrophilins that are expressed at the surface of adjacent cells. Mediates axon attraction towards cells expressing ntn1. mediates axon growth cone collapse and plays a repulsive role in neuron guidance via its interaction with unc-5 family members. Plays a role in the regulation of the density of glutamaergic synapses. Plays a role in signaling cascades downstream of fgfr1, and possibly also other fgfr family members. Plays a role in embryonic morphogenesis, but not in embryonic patterning. The protein is Leucine-rich repeat transmembrane protein FLRT3 of Xenopus tropicalis (Western clawed frog).